Reading from the N-terminus, the 394-residue chain is Elongation factor Tu (394 aa).

Residues 10-204 enclose the tr-type G domain; sequence KPHVNIGTIG…AVDSYIPQPV (195 aa). The segment at 19 to 26 is G1; the sequence is GHVDHGKT. Position 19–26 (19–26) interacts with GTP; it reads GHVDHGKT. Thr-26 is a Mg(2+) binding site. The interval 60-64 is G2; the sequence is GITIS. A G3 region spans residues 81-84; that stretch reads DCPG. GTP is bound by residues 81 to 85 and 136 to 139; these read DCPGH and NKVD. A G4 region spans residues 136 to 139; that stretch reads NKVD. The tract at residues 174–176 is G5; sequence SAL.

It belongs to the TRAFAC class translation factor GTPase superfamily. Classic translation factor GTPase family. EF-Tu/EF-1A subfamily. As to quaternary structure, monomer.

Its subcellular location is the cytoplasm. The catalysed reaction is GTP + H2O = GDP + phosphate + H(+). Its function is as follows. GTP hydrolase that promotes the GTP-dependent binding of aminoacyl-tRNA to the A-site of ribosomes during protein biosynthesis. This chain is Elongation factor Tu, found in Rickettsia rhipicephali.